Reading from the N-terminus, the 469-residue chain is uncharacterized protein (469 aa).

Disordered regions lie at residues 248–314 (RDDN…EPES) and 327–418 (QMDQ…PRPT). Composition is skewed to polar residues over residues 292–305 (ESSNTRDQQTNAAS) and 350–365 (TARQPQVTPTRVPNTV). Residues 366–377 (TATSASTPASTS) show a composition bias toward low complexity.

This is an uncharacterized protein from Cryphonectria parasitica (Chestnut blight fungus).